A 400-amino-acid polypeptide reads, in one-letter code: Enolase (400 aa).

Q153 is a (2R)-2-phosphoglycerate binding site. E195 functions as the Proton donor in the catalytic mechanism. Residues D231, E274, and D301 each coordinate Mg(2+). K326, R355, S356, and K377 together coordinate (2R)-2-phosphoglycerate. Residue K326 is the Proton acceptor of the active site.

The protein belongs to the enolase family. Mg(2+) serves as cofactor.

The protein resides in the cytoplasm. Its subcellular location is the secreted. The protein localises to the cell surface. The catalysed reaction is (2R)-2-phosphoglycerate = phosphoenolpyruvate + H2O. The protein operates within carbohydrate degradation; glycolysis; pyruvate from D-glyceraldehyde 3-phosphate: step 4/5. In terms of biological role, catalyzes the reversible conversion of 2-phosphoglycerate (2-PG) into phosphoenolpyruvate (PEP). It is essential for the degradation of carbohydrates via glycolysis. This chain is Enolase, found in Halorubrum lacusprofundi (strain ATCC 49239 / DSM 5036 / JCM 8891 / ACAM 34).